Consider the following 118-residue polypeptide: Basic phospholipase A2 PA-12C (118 aa).

7 cysteine pairs are disulfide-bonded: cysteine 11-cysteine 71, cysteine 27-cysteine 117, cysteine 29-cysteine 45, cysteine 44-cysteine 98, cysteine 51-cysteine 91, cysteine 60-cysteine 84, and cysteine 78-cysteine 89. Tyrosine 28, glycine 30, and glycine 32 together coordinate Ca(2+). Histidine 48 is a catalytic residue. Residue aspartate 49 coordinates Ca(2+). Aspartate 92 is a catalytic residue.

This sequence belongs to the phospholipase A2 family. Group I subfamily. D49 sub-subfamily. Ca(2+) is required as a cofactor. In terms of tissue distribution, expressed by the venom gland.

Its subcellular location is the secreted. It catalyses the reaction a 1,2-diacyl-sn-glycero-3-phosphocholine + H2O = a 1-acyl-sn-glycero-3-phosphocholine + a fatty acid + H(+). Functionally, PLA2 catalyzes the calcium-dependent hydrolysis of the 2-acyl groups in 3-sn-phosphoglycerides. The protein is Basic phospholipase A2 PA-12C of Pseudechis australis (Mulga snake).